Reading from the N-terminus, the 325-residue chain is Nod factor export ATP-binding protein I (325 aa).

An ABC transporter domain is found at 27-257 (LELRKVRKQY…QIGCDVVEVY (231 aa)). 59 to 66 (GPNGAGKT) is a binding site for ATP.

It belongs to the ABC transporter superfamily. Lipooligosaccharide exporter (TC 3.A.1.102) family. The complex is composed of two ATP-binding proteins (NodI) and two transmembrane proteins (NodJ).

It is found in the cell inner membrane. Its function is as follows. Part of the ABC transporter complex NodIJ involved in the export of the nodulation factors (Nod factors), the bacterial signal molecules that induce symbiosis and subsequent nodulation induction. Nod factors are LCO (lipo-chitin oligosaccharide), a modified beta-1,4-linked N-acetylglucosamine oligosaccharide. This subunit is responsible for energy coupling to the transport system. This chain is Nod factor export ATP-binding protein I, found in Cupriavidus pinatubonensis (strain JMP 134 / LMG 1197) (Cupriavidus necator (strain JMP 134)).